We begin with the raw amino-acid sequence, 625 residues long: Cytochrome c oxidase subunit 1 (625 aa).

A helical transmembrane segment spans residues 23-43 (IAIMYLIAGTLFFVKAGVMAL). Residue H69 participates in Fe(II)-heme a binding. A run of 6 helical transmembrane segments spans residues 72-92 (IMLF…VIPL), 99-119 (VAFP…GLLL), 151-171 (FYVL…INFL), 195-215 (FISS…LALL), 240-260 (IFWI…FGII), and 272-292 (LFGY…GFMV). Residues H246 and Y250 each coordinate Cu cation. Positions 246–250 (HPEVY) form a cross-link, 1'-histidyl-3'-tyrosine (His-Tyr). Cu cation-binding residues include H295 and H296. 2 helical membrane-spanning segments follow: residues 309–329 (IFAV…FNWL) and 343–363 (MLFA…GVML). H381 provides a ligand contact to heme a3. 5 helical membrane-spanning segments follow: residues 382-402 (FHYI…FYWY), 417-437 (LFFW…HLLG), 460-480 (ISTI…INVI), 551-571 (SILP…LIML), and 577-597 (IINP…CMFV). Residue H383 participates in Fe(II)-heme a binding.

This sequence belongs to the heme-copper respiratory oxidase family.

It localises to the cell membrane. It catalyses the reaction 4 Fe(II)-[cytochrome c] + O2 + 8 H(+)(in) = 4 Fe(III)-[cytochrome c] + 2 H2O + 4 H(+)(out). The protein operates within energy metabolism; oxidative phosphorylation. Functionally, cytochrome c oxidase is the component of the respiratory chain that catalyzes the reduction of oxygen to water. Subunits 1-3 form the functional core of the enzyme complex. CO I is the catalytic subunit of the enzyme. Electrons originating in cytochrome c are transferred via the copper A center of subunit 2 and heme A of subunit 1 to the bimetallic center formed by heme A3 and copper B. This Alkalihalophilus pseudofirmus (strain ATCC BAA-2126 / JCM 17055 / OF4) (Bacillus pseudofirmus) protein is Cytochrome c oxidase subunit 1 (ctaD).